The chain runs to 498 residues: Protein flp (498 aa).

A run of 4 helical transmembrane segments spans residues 6-26, 389-409, 433-453, and 471-491; these read LYFLSISIIILVAISIAIYIT, FNIVTVLMTTLILLAFIFSAY, LSLCICIALALILYALPYLIL, and LALITTLIALFSTLIVILLFL.

The protein localises to the cell membrane. Functionally, its precise function is unknown. Has no penicillin-binding activity and is not involved in methicillin resistance. The chain is Protein flp (flp) from Staphylococcus aureus (strain NCTC 8325 / PS 47).